Here is a 533-residue protein sequence, read N- to C-terminus: Na(+)/H(+) antiporter NhaB (533 aa).

The next 11 helical transmembrane spans lie at 10 to 30, 67 to 87, 96 to 116, 131 to 165, 209 to 229, 247 to 267, 310 to 330, 355 to 375, 396 to 416, 454 to 474, and 485 to 505; these read IGNF…SFLI, PGGL…SQVL, VLLL…LLLF, VSLL…FYSI, LLMH…VGEP, IRMS…CYIV, AFIG…VGLI, EEAL…AVII, LVIF…VFVG, ATPN…APLI, and ALPY…IGFL.

This sequence belongs to the NhaB Na(+)/H(+) (TC 2.A.34) antiporter family.

The protein localises to the cell inner membrane. The enzyme catalyses 2 Na(+)(in) + 3 H(+)(out) = 2 Na(+)(out) + 3 H(+)(in). Na(+)/H(+) antiporter that extrudes sodium in exchange for external protons. The sequence is that of Na(+)/H(+) antiporter NhaB from Shewanella oneidensis (strain ATCC 700550 / JCM 31522 / CIP 106686 / LMG 19005 / NCIMB 14063 / MR-1).